A 315-amino-acid chain; its full sequence is MSLEQRSPHCKPDEDLEAQGEDLGLMGAQEPTGEEEETTSSSDSKEEEVSAAGSSSPPQSPQGGASSSISVYYTLWSQFDEGSSSQEEEEPSSSVDPAQLEFMFQEALKLKVAELVHFLLHKYRVKEPVTKAEMLESVIKNYKRYFPVIFGKASEFMQVIFGTDVKEVDPAGHSYILVTALGLSCDSMLGDGHSMPKAALLIIVLGVILTKDNCAPEEVIWEALSVMGVYVGKEHMFYGEPRKLLTQDWVQENYLEYRQVPGSDPAHYEFLWGSKAHAETSYEKVINYLVMLNAREPICYPSLYEEVLGEEQEGV.

Basic and acidic residues predominate over residues 1–13; that stretch reads MSLEQRSPHCKPD. Residues 1 to 67 are disordered; it reads MSLEQRSPHC…PQSPQGGASS (67 aa). The span at 50 to 67 shows a compositional bias: low complexity; the sequence is SAAGSSSPPQSPQGGASS. In terms of domain architecture, MAGE spans 108 to 307; the sequence is LKLKVAELVH…ICYPSLYEEV (200 aa).

Expressed in many tumors of several types, such as melanoma, head and neck squamous cell carcinoma, lung carcinoma and breast carcinoma, but not in normal tissues except for testes and placenta.

Not known, though may play a role in embryonal development and tumor transformation or aspects of tumor progression. The sequence is that of Melanoma-associated antigen 9 (MAGEA9) from Homo sapiens (Human).